Consider the following 354-residue polypeptide: Probable L-ascorbate-6-phosphate lactonase UlaG (354 aa).

The protein belongs to the UlaG family. A divalent metal cation is required as a cofactor.

It localises to the cytoplasm. It carries out the reaction L-ascorbate 6-phosphate + H2O = 3-dehydro-L-gulonate 6-phosphate. It functions in the pathway cofactor degradation; L-ascorbate degradation; D-xylulose 5-phosphate from L-ascorbate: step 1/4. In terms of biological role, probably catalyzes the hydrolysis of L-ascorbate-6-P into 3-keto-L-gulonate-6-P. Is essential for L-ascorbate utilization under anaerobic conditions. The protein is Probable L-ascorbate-6-phosphate lactonase UlaG of Salmonella agona (strain SL483).